We begin with the raw amino-acid sequence, 363 residues long: Adenosine deaminase (363 aa).

Zn(2+)-binding residues include His42 and His44. Residues 44 to 46, Asp172, and Gly201 each bind a purine D-ribonucleoside; that span reads HLD. The segment at 170-184 is gating helix loop; regulates binding affinity for substrates and thus substrate selectivity; that stretch reads IGDTGHRAADIKASA. His226 provides a ligand contact to Zn(2+). A purine D-ribonucleoside-binding residues include Glu229, His253, and Asp310. Asp310 contributes to the Zn(2+) binding site.

The protein belongs to the metallo-dependent hydrolases superfamily. Adenosine and AMP deaminases family. It depends on Zn(2+) as a cofactor.

The enzyme catalyses adenosine + H2O + H(+) = inosine + NH4(+). The catalysed reaction is S-methyl-5'-thioadenosine + H2O + H(+) = S-methyl-5'-thioinosine + NH4(+). It functions in the pathway purine metabolism; purine nucleoside salvage. Its activity is regulated as follows. Inhibited by coformycin and methylthiocoformycin (MT-coformycin). In terms of biological role, catalyzes the hydrolytic deamination of adenosine to produce inosine. Unlike mammalian adenosine deaminases, also catalyzes the deamination of 5'-methylthioadenosine (MTA), a by-product of polyamine biosynthesis, to produce 5'-methylthioinosine (MTI). Plays an essential role in the purine salvage pathway which allows the parasite to use host cell purines for the synthesis of nucleic acids. This chain is Adenosine deaminase, found in Plasmodium knowlesi.